The sequence spans 940 residues: Protein translocase subunit SecA (940 aa).

ATP is bound by residues Gln85, 103 to 107 (GEGKT), and Asp505. Positions 851-940 (PVQDGAERPS…KGGGGRRRKK (90 aa)) are disordered. Basic and acidic residues predominate over residues 855 to 865 (GAERPSLEKEG). A compositionally biased stretch (basic residues) spans 928-940 (RRRKGGGGRRRKK).

It belongs to the SecA family. As to quaternary structure, monomer and homodimer. Part of the essential Sec protein translocation apparatus which comprises SecA, SecYEG and auxiliary proteins SecDF. Other proteins may also be involved.

The protein resides in the cell membrane. It localises to the cytoplasm. The enzyme catalyses ATP + H2O + cellular proteinSide 1 = ADP + phosphate + cellular proteinSide 2.. Part of the Sec protein translocase complex. Interacts with the SecYEG preprotein conducting channel. Has a central role in coupling the hydrolysis of ATP to the transfer of proteins into and across the cell membrane, serving as an ATP-driven molecular motor driving the stepwise translocation of polypeptide chains across the membrane. This Streptomyces griseus protein is Protein translocase subunit SecA.